The primary structure comprises 243 residues: Ribosomal RNA small subunit methyltransferase G (243 aa).

S-adenosyl-L-methionine contacts are provided by residues Gly-82, Phe-87, 133–134 (AE), and Arg-152.

This sequence belongs to the methyltransferase superfamily. RNA methyltransferase RsmG family.

The protein localises to the cytoplasm. Specifically methylates the N7 position of a guanine in 16S rRNA. This Clostridium novyi (strain NT) protein is Ribosomal RNA small subunit methyltransferase G.